The chain runs to 615 residues: Melanopsin-B (615 aa).

The Extracellular segment spans residues 1 to 19 (MDMDRGFYRKVDVPDHAHY). Residues 20–40 (VIAFFVLIIGVVGVTGNALVM) form a helical membrane-spanning segment. Residues 41–56 (YAFLCNKKLRTPPNYF) lie on the Cytoplasmic side of the membrane. A helical membrane pass occupies residues 57–77 (IMNLAVSDFLMAITQSPIFFI). The Extracellular portion of the chain corresponds to 78 to 93 (NSLFKEWIFGETGCRM). Cysteine 91 and cysteine 169 form a disulfide bridge. Residues 94 to 114 (YAFCGALFGITSMINLLAISL) form a helical membrane-spanning segment. The Cytoplasmic segment spans residues 115–136 (DRYIVITKPPQAIRWVSGRRTM). A helical membrane pass occupies residues 137–157 (VVILLVWLYSLAWSLAPLLGW). Residues 158–189 (SSYIPEGLMTSCTWDYVTSTPANKGYTLMLCC) are Extracellular-facing. The chain crosses the membrane as a helical span at residues 190-210 (FVFFIPLGIISYCYLCMFLAI). Residues 211–244 (RSAGREIERLGTQVRKSTLMQQQTIKTEWKLTKV) are Cytoplasmic-facing. Residues 245-265 (AFVVIIVYVHSWSPYACVTLI) form a helical membrane-spanning segment. At 266–279 (AWAGYGSHLSPYSK) the chain is on the extracellular side. A helical transmembrane segment spans residues 280-300 (AVPAVIAKASAIYNPFIYAII). Residue lysine 287 is modified to N6-(retinylidene)lysine. Topologically, residues 301–615 (HSKYRDTLAE…RNLEESFMAL (315 aa)) are cytoplasmic. Disordered regions lie at residues 390-420 (LGRS…TVAD) and 465-502 (NKHP…QNHP). Over residues 401-415 (AQQNRQTRSSDTLEQ) the composition is skewed to polar residues. Basic residues predominate over residues 469-478 (NNNHKNHNNR).

The protein belongs to the G-protein coupled receptor 1 family. Opsin subfamily. As to expression, expressed in the inner nuclear layer of the retina, possibly in amacrine and ganglion cells. Expressed in a subpopulation of neurons in the dorsal habenula.

The protein resides in the cell membrane. Its function is as follows. Photoreceptor implicated in non-image-forming responses to light. In Gadus morhua (Atlantic cod), this protein is Melanopsin-B (opn4b).